A 342-amino-acid chain; its full sequence is Anthranilate phosphoribosyltransferase (342 aa).

5-phospho-alpha-D-ribose 1-diphosphate contacts are provided by residues Gly83, 86-87, Thr91, 93-96, 111-119, and Ser123; these read GD, NIST, and KHGGRSVSS. Residue Gly83 coordinates anthranilate. Residue Ser95 participates in Mg(2+) binding. Arg169 serves as a coordination point for anthranilate. Positions 228 and 229 each coordinate Mg(2+).

This sequence belongs to the anthranilate phosphoribosyltransferase family. As to quaternary structure, homodimer. The cofactor is Mg(2+).

The enzyme catalyses N-(5-phospho-beta-D-ribosyl)anthranilate + diphosphate = 5-phospho-alpha-D-ribose 1-diphosphate + anthranilate. The protein operates within amino-acid biosynthesis; L-tryptophan biosynthesis; L-tryptophan from chorismate: step 2/5. Its function is as follows. Catalyzes the transfer of the phosphoribosyl group of 5-phosphorylribose-1-pyrophosphate (PRPP) to anthranilate to yield N-(5'-phosphoribosyl)-anthranilate (PRA). The polypeptide is Anthranilate phosphoribosyltransferase (Chromobacterium violaceum (strain ATCC 12472 / DSM 30191 / JCM 1249 / CCUG 213 / NBRC 12614 / NCIMB 9131 / NCTC 9757 / MK)).